The chain runs to 334 residues: Ferredoxin--NADP reductase (334 aa).

FAD-binding residues include Asp33, Gln41, Tyr46, Ala86, Phe120, Asp286, and Thr327.

This sequence belongs to the ferredoxin--NADP reductase type 2 family. In terms of assembly, homodimer. FAD is required as a cofactor.

The enzyme catalyses 2 reduced [2Fe-2S]-[ferredoxin] + NADP(+) + H(+) = 2 oxidized [2Fe-2S]-[ferredoxin] + NADPH. This is Ferredoxin--NADP reductase from Rickettsia akari (strain Hartford).